A 424-amino-acid chain; its full sequence is 26S proteasome regulatory subunit 6A homolog A (424 aa).

Positions 1–21 (MATPMVEDTSSFEEDQLASMS) are disordered. N-acetylalanine is present on A2. S19 carries the post-translational modification Phosphoserine. An ATP-binding site is contributed by 212–219 (GPPGTGKT). K235 participates in a covalent cross-link: Glycyl lysine isopeptide (Lys-Gly) (interchain with G-Cter in ubiquitin). An O-acetylthreonine modification is found at T278. Glycyl lysine isopeptide (Lys-Gly) (interchain with G-Cter in ubiquitin) cross-links involve residues K279 and K416.

Belongs to the AAA ATPase family. As to quaternary structure, component of the 19S regulatory particle (RP/PA700) base subcomplex of the 26S proteasome. The 26S proteasome is composed of a core protease (CP), known as the 20S proteasome, capped at one or both ends by the 19S regulatory particle (RP/PA700). The RP/PA700 complex is composed of at least 17 different subunits in two subcomplexes, the base and the lid, which form the portions proximal and distal to the 20S proteolytic core, respectively. As to expression, ubiquitous.

The protein resides in the cytoplasm. The protein localises to the nucleus. The 26S proteasome is involved in the ATP-dependent degradation of ubiquitinated proteins. The regulatory (or ATPase) complex confers ATP dependency and substrate specificity to the 26S complex. Interacts with transit peptides of proteins targeted to the chloroplast, and may be involved in the degradation of unimported plastid protein precursors. Plays a essential role in the gametophyte development. Involved in tolerance to zinc deficiency, possibly through alleviation of oxidative stresses or processing of poly-ubiquitinated proteins. This chain is 26S proteasome regulatory subunit 6A homolog A, found in Arabidopsis thaliana (Mouse-ear cress).